A 156-amino-acid chain; its full sequence is ATP synthase subunit b (156 aa).

A helical membrane pass occupies residues 7–26 (LIGQAIWFALFIWITMKYVW).

It belongs to the ATPase B chain family. F-type ATPases have 2 components, F(1) - the catalytic core - and F(0) - the membrane proton channel. F(1) has five subunits: alpha(3), beta(3), gamma(1), delta(1), epsilon(1). F(0) has three main subunits: a(1), b(2) and c(10-14). The alpha and beta chains form an alternating ring which encloses part of the gamma chain. F(1) is attached to F(0) by a central stalk formed by the gamma and epsilon chains, while a peripheral stalk is formed by the delta and b chains.

It is found in the cell inner membrane. F(1)F(0) ATP synthase produces ATP from ADP in the presence of a proton or sodium gradient. F-type ATPases consist of two structural domains, F(1) containing the extramembraneous catalytic core and F(0) containing the membrane proton channel, linked together by a central stalk and a peripheral stalk. During catalysis, ATP synthesis in the catalytic domain of F(1) is coupled via a rotary mechanism of the central stalk subunits to proton translocation. In terms of biological role, component of the F(0) channel, it forms part of the peripheral stalk, linking F(1) to F(0). This is ATP synthase subunit b from Dechloromonas aromatica (strain RCB).